Here is a 156-residue protein sequence, read N- to C-terminus: Ribosomal RNA large subunit methyltransferase H (156 aa).

S-adenosyl-L-methionine-binding positions include L73, G104, and 123 to 128 (ISSMTL).

Belongs to the RNA methyltransferase RlmH family. Homodimer.

It is found in the cytoplasm. It catalyses the reaction pseudouridine(1915) in 23S rRNA + S-adenosyl-L-methionine = N(3)-methylpseudouridine(1915) in 23S rRNA + S-adenosyl-L-homocysteine + H(+). Functionally, specifically methylates the pseudouridine at position 1915 (m3Psi1915) in 23S rRNA. In Burkholderia multivorans (strain ATCC 17616 / 249), this protein is Ribosomal RNA large subunit methyltransferase H.